The chain runs to 45 residues: Peroxidase 3 (45 aa).

This sequence belongs to the peroxidase family. Classical plant (class III) peroxidase subfamily. Heme b is required as a cofactor. Ca(2+) serves as cofactor.

The protein localises to the secreted. It catalyses the reaction 2 a phenolic donor + H2O2 = 2 a phenolic radical donor + 2 H2O. In terms of biological role, removal of H(2)O(2), oxidation of toxic reductants, biosynthesis and degradation of lignin, suberization, auxin catabolism, response to environmental stresses such as wounding, pathogen attack and oxidative stress. These functions might be dependent on each isozyme/isoform in each plant tissue. This chain is Peroxidase 3, found in Capsicum annuum (Capsicum pepper).